The following is a 416-amino-acid chain: UDP-N-acetylglucosamine 1-carboxyvinyltransferase (416 aa).

22–23 (KN) contributes to the phosphoenolpyruvate binding site. Residue Arg-91 participates in UDP-N-acetyl-alpha-D-glucosamine binding. Cys-115 acts as the Proton donor in catalysis. Cys-115 is subject to 2-(S-cysteinyl)pyruvic acid O-phosphothioketal. Residues 120–124 (RPIDL), Asp-305, and Ile-327 contribute to the UDP-N-acetyl-alpha-D-glucosamine site.

Belongs to the EPSP synthase family. MurA subfamily.

Its subcellular location is the cytoplasm. It carries out the reaction phosphoenolpyruvate + UDP-N-acetyl-alpha-D-glucosamine = UDP-N-acetyl-3-O-(1-carboxyvinyl)-alpha-D-glucosamine + phosphate. It participates in cell wall biogenesis; peptidoglycan biosynthesis. Functionally, cell wall formation. Adds enolpyruvyl to UDP-N-acetylglucosamine. The protein is UDP-N-acetylglucosamine 1-carboxyvinyltransferase of Buchnera aphidicola subsp. Acyrthosiphon pisum (strain 5A).